Here is a 145-residue protein sequence, read N- to C-terminus: D-aminoacyl-tRNA deacylase (145 aa).

The Gly-cisPro motif, important for rejection of L-amino acids motif lies at 137–138 (GP).

It belongs to the DTD family. As to quaternary structure, homodimer.

The protein localises to the cytoplasm. The catalysed reaction is glycyl-tRNA(Ala) + H2O = tRNA(Ala) + glycine + H(+). It carries out the reaction a D-aminoacyl-tRNA + H2O = a tRNA + a D-alpha-amino acid + H(+). An aminoacyl-tRNA editing enzyme that deacylates mischarged D-aminoacyl-tRNAs. Also deacylates mischarged glycyl-tRNA(Ala), protecting cells against glycine mischarging by AlaRS. Acts via tRNA-based rather than protein-based catalysis; rejects L-amino acids rather than detecting D-amino acids in the active site. By recycling D-aminoacyl-tRNA to D-amino acids and free tRNA molecules, this enzyme counteracts the toxicity associated with the formation of D-aminoacyl-tRNA entities in vivo and helps enforce protein L-homochirality. This Escherichia coli O7:K1 (strain IAI39 / ExPEC) protein is D-aminoacyl-tRNA deacylase.